Consider the following 65-residue polypeptide: Large ribosomal subunit protein uL30 (65 aa).

Belongs to the universal ribosomal protein uL30 family. In terms of assembly, part of the 50S ribosomal subunit.

The protein is Large ribosomal subunit protein uL30 of Mycobacterium bovis (strain ATCC BAA-935 / AF2122/97).